The chain runs to 180 residues: Inner membrane-spanning protein YciB (180 aa).

Transmembrane regions (helical) follow at residues 25–45 (QNAT…CYII), 49–69 (VSKL…ITLI), 76–96 (IKIK…MSGI), 118–138 (IILS…NEVV), and 150–170 (FKVF…LPLL).

It belongs to the YciB family.

The protein resides in the cell inner membrane. Plays a role in cell envelope biogenesis, maintenance of cell envelope integrity and membrane homeostasis. The protein is Inner membrane-spanning protein YciB of Rickettsia prowazekii (strain Madrid E).